Here is a 104-residue protein sequence, read N- to C-terminus: PLAT domain-containing protein 3 (104 aa).

Residues 1 to 104 (MSLRLYDSYG…LARDASPYEL (104 aa)) enclose the PLAT domain.

The protein is PLAT domain-containing protein 3 of Arabidopsis thaliana (Mouse-ear cress).